We begin with the raw amino-acid sequence, 381 residues long: Cobalt-precorrin-5B C(1)-methyltransferase (381 aa).

It belongs to the CbiD family.

It carries out the reaction Co-precorrin-5B + S-adenosyl-L-methionine = Co-precorrin-6A + S-adenosyl-L-homocysteine. The protein operates within cofactor biosynthesis; adenosylcobalamin biosynthesis; cob(II)yrinate a,c-diamide from sirohydrochlorin (anaerobic route): step 6/10. In terms of biological role, catalyzes the methylation of C-1 in cobalt-precorrin-5B to form cobalt-precorrin-6A. The protein is Cobalt-precorrin-5B C(1)-methyltransferase of Clostridium botulinum (strain Eklund 17B / Type B).